Consider the following 233-residue polypeptide: Large ribosomal subunit protein uL22m (233 aa).

This sequence belongs to the universal ribosomal protein uL22 family. As to quaternary structure, component of the mitochondrial ribosome large subunit (39S) which comprises a 16S rRNA and about 50 distinct proteins.

Its subcellular location is the mitochondrion. This chain is Large ribosomal subunit protein uL22m (mRpL22), found in Drosophila melanogaster (Fruit fly).